We begin with the raw amino-acid sequence, 280 residues long: 4-diphosphocytidyl-2-C-methyl-D-erythritol kinase (280 aa).

Lys-11 is an active-site residue. 95 to 105 (PVGAGLGGGSS) contacts ATP. The active site involves Asp-137.

It belongs to the GHMP kinase family. IspE subfamily.

It carries out the reaction 4-CDP-2-C-methyl-D-erythritol + ATP = 4-CDP-2-C-methyl-D-erythritol 2-phosphate + ADP + H(+). It participates in isoprenoid biosynthesis; isopentenyl diphosphate biosynthesis via DXP pathway; isopentenyl diphosphate from 1-deoxy-D-xylulose 5-phosphate: step 3/6. Its function is as follows. Catalyzes the phosphorylation of the position 2 hydroxy group of 4-diphosphocytidyl-2C-methyl-D-erythritol. The polypeptide is 4-diphosphocytidyl-2-C-methyl-D-erythritol kinase (Citrifermentans bemidjiense (strain ATCC BAA-1014 / DSM 16622 / JCM 12645 / Bem) (Geobacter bemidjiensis)).